We begin with the raw amino-acid sequence, 256 residues long: Triosephosphate isomerase (256 aa).

9–11 contributes to the substrate binding site; it reads NWK. Catalysis depends on H96, which acts as the Electrophile. The active-site Proton acceptor is the E168. Residues S213 and 234-235 contribute to the substrate site; that span reads GG.

Belongs to the triosephosphate isomerase family. In terms of assembly, homodimer.

The protein localises to the cytoplasm. The enzyme catalyses D-glyceraldehyde 3-phosphate = dihydroxyacetone phosphate. It participates in carbohydrate biosynthesis; gluconeogenesis. Its pathway is carbohydrate degradation; glycolysis; D-glyceraldehyde 3-phosphate from glycerone phosphate: step 1/1. Involved in the gluconeogenesis. Catalyzes stereospecifically the conversion of dihydroxyacetone phosphate (DHAP) to D-glyceraldehyde-3-phosphate (G3P). The protein is Triosephosphate isomerase of Baumannia cicadellinicola subsp. Homalodisca coagulata.